The primary structure comprises 4981 residues: Protocadherin Fat 4 (4981 aa).

A signal peptide spans 1–38; that stretch reads MDLAPDRATGRPWLPLHTLSVSQLLRVFWLLSLLPGQA. Over 39 to 4504 the chain is Extracellular; that stretch reads WVHGAEPRQV…PEEISLPLWA (4466 aa). Cadherin domains are found at residues 43 to 135, 136 to 250, 251 to 353, 359 to 475, 476 to 582, 584 to 689, 690 to 793, 794 to 893, 894 to 996, 997 to 1100, 1101 to 1210, 1211 to 1315, 1316 to 1420, 1421 to 1529, 1529 to 1629, 1630 to 1740, 1741 to 1841, 1842 to 1944, 1945 to 2051, 2051 to 2154, 2155 to 2259, 2260 to 2364, 2365 to 2466, 2467 to 2567, 2568 to 2669, 2670 to 2773, 2773 to 2872, 2873 to 2983, 2984 to 3089, 3090 to 3194, 3195 to 3298, 3299 to 3404, 3405 to 3510, and 3509 to 3620; these read AEPR…APVF, PDPS…PPVF, GSSH…DPVV, PATS…PPVF, SQQV…KPVF, QPEG…SPVF, YPVQ…PPVF, SQVA…SPHF, LQAI…SPVF, DQLS…RPLF, NSTN…APKF, LKDF…TPSF, PKST…PPSF, PPGD…VPMF, FISQ…GPVF, TQPK…PPVF, PTDM…TPKF, SRPV…PPIF, SLNS…PPTF, FLSP…NPIF, AQAL…VPVF, ELSP…VPTF, ASKA…PPRF, QHHP…FPKV, RAKE…APIF, KEDP…APRF, FSQI…APRF, SRTS…APQF, LKSK…TPEF, SQSH…SPVF, LSDD…VPRF, VSKL…PPIF, TLNI…GPML, and MLTV…VEIF. Residues Asn-84 and Asn-237 are each glycosylated (N-linked (GlcNAc...) asparagine). 18 N-linked (GlcNAc...) asparagine glycosylation sites follow: Asn-393, Asn-416, Asn-435, Asn-483, Asn-551, Asn-615, Asn-676, Asn-721, Asn-825, Asn-880, Asn-946, Asn-1085, Asn-1101, Asn-1104, Asn-1225, Asn-1296, Asn-1389, and Asn-1514. Residues Asn-1828, Asn-1899, Asn-1967, and Asn-2119 are each glycosylated (N-linked (GlcNAc...) asparagine). Residues Asn-2387 and Asn-2430 are each glycosylated (N-linked (GlcNAc...) asparagine). Residues Asn-2921, Asn-2937, Asn-3036, Asn-3140, Asn-3217, Asn-3392, and Asn-3477 are each glycosylated (N-linked (GlcNAc...) asparagine). Asn-3706 and Asn-3758 each carry an N-linked (GlcNAc...) asparagine glycan. Residues 3802–3860 form the EGF-like 1 domain; the sequence is DHDSCVHGPCQNGGSCLRRLAVSSVLKSRESLPVIIVANEPLQPFLCKCLPGYAGSWCE. Disulfide bonds link Cys-3806-Cys-3817, Cys-3811-Cys-3848, Cys-3850-Cys-3859, Cys-3866-Cys-3877, Cys-3871-Cys-3886, Cys-3888-Cys-3897, Cys-3904-Cys-3915, Cys-3909-Cys-3924, Cys-3926-Cys-3935, Cys-3942-Cys-3953, Cys-3947-Cys-3962, and Cys-3964-Cys-3973. Residues 3862 to 3898 enclose the EGF-like 2; calcium-binding domain; sequence DIDECLPSPCHSGGTCHNLVGGFSCSCPDGFTGRACE. The region spanning 3900–3936 is the EGF-like 3; calcium-binding domain; it reads DINECLQSPCKNGAICQNFPGSFNCVCKTGYTGKMCE. An EGF-like 4 domain is found at 3938–3974; it reads SVNYCECNPCFNGGSCQSGVDSYYCHCPFGVFGKHCE. Residues 3975 to 4159 enclose the Laminin G-like 1 domain; sequence LNSYGFEELS…LAAQGILDQC (185 aa). N-linked (GlcNAc...) asparagine glycosylation occurs at Asn-4017. 4 disulfides stabilise this stretch: Cys-4133-Cys-4159, Cys-4166-Cys-4177, Cys-4171-Cys-4186, and Cys-4188-Cys-4197. An EGF-like 5 domain is found at 4162-4198; sequence LEGACTRSPCQHGGTCMDYWSWQQCHCKEGLTGKYCE. In terms of domain architecture, Laminin G-like 2 spans 4217–4398; sequence YHMSQNEKRE…KTDPSVKIGC (182 aa). N-linked (GlcNAc...) asparagine glycosylation is found at Asn-4267 and Asn-4312. 4 disulfides stabilise this stretch: Cys-4365-Cys-4398, Cys-4430-Cys-4441, Cys-4435-Cys-4451, and Cys-4453-Cys-4462. Positions 4426–4463 constitute an EGF-like 6 domain; it reads PPGDCASHPCQNGGSCEPGLHSGFTCSCPDSHTGRTCE. A helical transmembrane segment spans residues 4505–4525; the sequence is VPAIVGSCATVLALLVLSLIL. Over 4526 to 4981 the chain is Cytoplasmic; the sequence is CNQCRGKKAK…PKDGEAEQYV (456 aa). Disordered stretches follow at residues 4534 to 4584, 4680 to 4713, 4752 to 4856, 4869 to 4911, and 4957 to 4981; these read AKNP…PDII, QGLR…STFY, RSKS…MEYD, KLSQ…AAPG, and AAAN…EQYV. Over residues 4680–4699 the composition is skewed to polar residues; it reads QGLRTSSLSHSACPTPNPLS. A necessary and sufficient for interaction with MPDZ region spans residues 4706–4795; it reads FSKSSTFYRN…GLSIEEVERL (90 aa). Positions 4809–4821 are enriched in basic and acidic residues; it reads DHGRSSSEEDCRR. A Phosphoserine modification is found at Ser-4876. A compositionally biased stretch (basic and acidic residues) spans 4971 to 4981; the sequence is VPKDGEAEQYV.

As to quaternary structure, heterophilic interaction with DCHS1; this interaction affects their respective protein levels. Interacts (via cytoplasmic domain) with MPDZ. Forms a complex with PALS1 and MPDZ. In terms of tissue distribution, widely expressed. Expressed in fetal brain, infant brain, brain tumor and colorectal cancer.

Its subcellular location is the membrane. Cadherins are calcium-dependent cell adhesion proteins. FAT4 plays a role in the maintenance of planar cell polarity as well as in inhibition of YAP1-mediated neuroprogenitor cell proliferation and differentiation. The protein is Protocadherin Fat 4 (FAT4) of Homo sapiens (Human).